A 338-amino-acid chain; its full sequence is Cytochrome c biogenesis protein CcsA (338 aa).

8 helical membrane-spanning segments follow: residues 15–35 (FLVLFLTMLLYWGGAAFPNIP), 36–56 (GLTGLGTLGVAIANLCMATLL), 71–91 (LYESLFFLAWGVTTMHLVAEW), 97–117 (WVGVITAPVAMGITAFAALSL), 142–162 (VMMISYAALLVGSLLAIAFLI), 246–266 (IIGLGFPLLTIGIIAGAVWAN), 273–293 (WSWDPKETWALITWLVFAAYL), and 307–327 (AFLAAAGFFVVWVCYLGVNIL).

Belongs to the CcmF/CycK/Ccl1/NrfE/CcsA family. May interact with ccs1.

Its subcellular location is the cellular thylakoid membrane. Its function is as follows. Required during biogenesis of c-type cytochromes (cytochrome c6 and cytochrome f) at the step of heme attachment. This Picosynechococcus sp. (strain ATCC 27264 / PCC 7002 / PR-6) (Agmenellum quadruplicatum) protein is Cytochrome c biogenesis protein CcsA.